Here is a 433-residue protein sequence, read N- to C-terminus: GTPase Obg (433 aa).

In terms of domain architecture, Obg spans 1-159 (MAFRDVLDIE…RRVRLELRLI (159 aa)). The OBG-type G domain maps to 160–327 (ADVGLVGYPN…LRQALFDLLP (168 aa)). Residues 166–173 (GYPNAGKS), 191–195 (FTTLS), 214–217 (DIPG), 280–283 (NKIE), and 308–310 (SAK) each bind ATP. Residues Ser173 and Thr193 each contribute to the Mg(2+) site. An OCT domain is found at 342 to 430 (PEEVREEPLT…IGSFRFEYYA (89 aa)).

The protein belongs to the TRAFAC class OBG-HflX-like GTPase superfamily. OBG GTPase family. In terms of assembly, monomer. The cofactor is Mg(2+).

It is found in the cytoplasm. Functionally, an essential GTPase which binds GTP, GDP and possibly (p)ppGpp with moderate affinity, with high nucleotide exchange rates and a fairly low GTP hydrolysis rate. Plays a role in control of the cell cycle, stress response, ribosome biogenesis and in those bacteria that undergo differentiation, in morphogenesis control. The sequence is that of GTPase Obg from Deinococcus geothermalis (strain DSM 11300 / CIP 105573 / AG-3a).